The following is a 133-amino-acid chain: Hemoglobin subunit alpha-2 (133 aa).

One can recognise a Globin domain in the interval 1–133 (NVKAVWEHVK…VKNVLTSRYR (133 aa)). His-50 serves as a coordination point for O2. His-79 serves as a coordination point for heme b.

Belongs to the globin family. As to quaternary structure, minor hemoglobin is a heterotetramer of two alpha-2 chains and two beta-2 chains. As to expression, red blood cells.

Its function is as follows. Involved in oxygen transport from the lung to the various peripheral tissues. In Pleurodeles waltl (Iberian ribbed newt), this protein is Hemoglobin subunit alpha-2.